Consider the following 903-residue polypeptide: DNA mismatch repair protein MutS (903 aa).

Glycine 655–serine 662 serves as a coordination point for ATP.

It belongs to the DNA mismatch repair MutS family.

Its function is as follows. This protein is involved in the repair of mismatches in DNA. It is possible that it carries out the mismatch recognition step. This protein has a weak ATPase activity. This is DNA mismatch repair protein MutS from Caulobacter vibrioides (strain ATCC 19089 / CIP 103742 / CB 15) (Caulobacter crescentus).